Consider the following 96-residue polypeptide: Plasminogen-like protein A (96 aa).

The N-terminal stretch at Met1 to Gly19 is a signal peptide. In terms of domain architecture, PAN spans Glu20 to Lys96. 2 cysteine pairs are disulfide-bonded: Cys49-Cys73 and Cys53-Cys61.

Expressed in liver.

The protein localises to the secreted. In terms of biological role, may bind non-covalently to lysine binding sites present in the kringle structures of plasminogen. This may interfere with the binding of fibrin or alpha-2-antiplasmin to plasminogen and may result in the localization of activity at sites necessary for extracellular matrix destruction. This chain is Plasminogen-like protein A (PLGLA), found in Homo sapiens (Human).